A 245-amino-acid chain; its full sequence is Uridylate kinase (245 aa).

Residue 18–21 coordinates ATP; sequence KLSG. Gly60 contributes to the UMP binding site. Gly61 and Arg65 together coordinate ATP. Residues Asp80 and 141-148 contribute to the UMP site; that span reads TGNPFFTT. ATP contacts are provided by Thr168, Tyr174, and Asp177.

The protein belongs to the UMP kinase family. Homohexamer.

Its subcellular location is the cytoplasm. It catalyses the reaction UMP + ATP = UDP + ADP. It functions in the pathway pyrimidine metabolism; CTP biosynthesis via de novo pathway; UDP from UMP (UMPK route): step 1/1. Its activity is regulated as follows. Inhibited by UTP. Its function is as follows. Catalyzes the reversible phosphorylation of UMP to UDP. In Pseudomonas aeruginosa (strain UCBPP-PA14), this protein is Uridylate kinase.